We begin with the raw amino-acid sequence, 323 residues long: Tyrosine recombinase XerD (323 aa).

A Core-binding (CB) domain is found at 21-106 (AEDDQAIQRF…TLRGFYALCL (86 aa)). The Tyr recombinase domain occupies 127–317 (SLPKALTESQ…ARQHLQTLHA (191 aa)). Catalysis depends on residues Arg-167, Lys-191, His-269, Arg-272, and His-295. Catalysis depends on Tyr-304, which acts as the O-(3'-phospho-DNA)-tyrosine intermediate.

The protein belongs to the 'phage' integrase family. XerD subfamily. As to quaternary structure, forms a cyclic heterotetrameric complex composed of two molecules of XerC and two molecules of XerD.

The protein resides in the cytoplasm. Its function is as follows. Site-specific tyrosine recombinase, which acts by catalyzing the cutting and rejoining of the recombining DNA molecules. The XerC-XerD complex is essential to convert dimers of the bacterial chromosome into monomers to permit their segregation at cell division. It also contributes to the segregational stability of plasmids. The chain is Tyrosine recombinase XerD from Xanthomonas campestris pv. campestris (strain ATCC 33913 / DSM 3586 / NCPPB 528 / LMG 568 / P 25).